The primary structure comprises 1676 residues: Protein TIC 214 (1676 aa).

6 consecutive transmembrane segments (helical) span residues 24-44, 70-90, 93-113, 130-150, 170-190, and 218-238; these read KIIN…ALAL, LILG…YIAF, PYTL…GNNL, LEIL…TCIF, MVFL…VLMC, and FFLV…IQSL. Composition is skewed to basic and acidic residues over residues 264–276 and 283–298; these read LKKS…GKST and SHEK…SKLE. Disordered stretches follow at residues 264-302, 546-610, 1123-1151, and 1372-1436; these read LKKS…NEDE, LVVF…SYSI, NKQS…NLIL, and QQQN…SEDD. Polar residues predominate over residues 562-586; the sequence is DSGNIQNKSSDKTINPQNNLTNSKT. A compositionally biased stretch (basic and acidic residues) spans 597–610; it reads TTEKEPKDDKSYSI. Over residues 1123-1138 the composition is skewed to polar residues; the sequence is NKQSLQKGNSKGNSNL. Residues 1372–1390 show a composition bias toward low complexity; that stretch reads QQQNQTTTKINTETKNQQK. A coiled-coil region spans residues 1384 to 1436; sequence ETKNQQKNRVENEENKETENQQNAETKNKQKSKTENEENKETENQQNDESEDD. 2 stretches are compositionally biased toward basic and acidic residues: residues 1391–1402 and 1409–1426; these read NRVENEENKETE and TKNK…KETE.

This sequence belongs to the TIC214 family. As to quaternary structure, part of the Tic complex.

It is found in the plastid. The protein resides in the chloroplast inner membrane. In terms of biological role, involved in protein precursor import into chloroplasts. May be part of an intermediate translocation complex acting as a protein-conducting channel at the inner envelope. In Cuscuta obtusiflora (Peruvian dodder), this protein is Protein TIC 214.